The chain runs to 754 residues: Phosphatidylinositol 4-phosphate 5-kinase 7 (754 aa).

8 MORN repeats span residues 16-38, 39-61, 62-84, 85-107, 108-130, 131-153, 154-176, and 177-198; these read YSGEVKGIIPNGKGKYAWSDGTI, YEGDWDEGKISGKGKLIWSSGAK, YEGDFSGGYLHGFGTMTSPDESV, YSGAWRMNVRHGLGRKEYCNSDL, YDGLWKEGLQDGRGSYSWTNGNR, YIGNWKKGKMCERGVMRWENGDL, YDGFWLNGFRHGSGVYKFADGCL, and YYGTWSRGLKDGKGVFYPAGTK. Residues 329–750 enclose the PIPK domain; that stretch reads GEHNYYLMLN…RFVNFLHKVF (422 aa). The segment at 710–731 is activation loop; the sequence is YNTKKKVEHTCKSLQYDPMTIS.

The catalysed reaction is a 1,2-diacyl-sn-glycero-3-phospho-(1D-myo-inositol 4-phosphate) + ATP = a 1,2-diacyl-sn-glycero-3-phospho-(1D-myo-inositol-4,5-bisphosphate) + ADP + H(+). This is Phosphatidylinositol 4-phosphate 5-kinase 7 (PIP5K7) from Arabidopsis thaliana (Mouse-ear cress).